A 757-amino-acid chain; its full sequence is Endonuclease MutS2 (757 aa).

321–328 provides a ligand contact to ATP; it reads GPNMGGKT. Residues 681–756 form the Smr domain; it reads IDIRGMTVEE…GTGVTVVEVK (76 aa).

It belongs to the DNA mismatch repair MutS family. MutS2 subfamily. As to quaternary structure, homodimer. Binds to stalled ribosomes, contacting rRNA.

Functionally, endonuclease that is involved in the suppression of homologous recombination and thus may have a key role in the control of bacterial genetic diversity. Its function is as follows. Acts as a ribosome collision sensor, splitting the ribosome into its 2 subunits. Detects stalled/collided 70S ribosomes which it binds and splits by an ATP-hydrolysis driven conformational change. Acts upstream of the ribosome quality control system (RQC), a ribosome-associated complex that mediates the extraction of incompletely synthesized nascent chains from stalled ribosomes and their subsequent degradation. Probably generates substrates for RQC. The sequence is that of Endonuclease MutS2 from Thermotoga petrophila (strain ATCC BAA-488 / DSM 13995 / JCM 10881 / RKU-1).